The sequence spans 518 residues: Chromosomal replication initiator protein DnaA (518 aa).

The segment at 1–76 (METDGGDFPS…RALSEAYGSP (76 aa)) is domain I, interacts with DnaA modulators. Residues 76-176 (PIRLAVTVDP…RRPTTRIENS (101 aa)) form a domain II region. The tract at residues 91–174 (LTPERTGEHS…QPRRPTTRIE (84 aa)) is disordered. Positions 124 to 135 (DGLHLDERRSGS) are enriched in basic and acidic residues. A compositionally biased stretch (acidic residues) spans 136–147 (LEEDSPLDDSDP). The interval 177–393 (RLNPKYIFET…GALIRVTAFA (217 aa)) is domain III, AAA+ region. ATP-binding residues include G221, G223, K224, and T225. Residues 394–518 (SLNRQPVDMQ…TNRIKKQSGA (125 aa)) are domain IV, binds dsDNA.

Belongs to the DnaA family. In terms of assembly, oligomerizes as a right-handed, spiral filament on DNA at oriC.

It localises to the cytoplasm. Functionally, plays an essential role in the initiation and regulation of chromosomal replication. ATP-DnaA binds to the origin of replication (oriC) to initiate formation of the DNA replication initiation complex once per cell cycle. Binds the DnaA box (a 9 base pair repeat at the origin) and separates the double-stranded (ds)DNA. Forms a right-handed helical filament on oriC DNA; dsDNA binds to the exterior of the filament while single-stranded (ss)DNA is stabiized in the filament's interior. The ATP-DnaA-oriC complex binds and stabilizes one strand of the AT-rich DNA unwinding element (DUE), permitting loading of DNA polymerase. After initiation quickly degrades to an ADP-DnaA complex that is not apt for DNA replication. Binds acidic phospholipids. The chain is Chromosomal replication initiator protein DnaA from Kineococcus radiotolerans (strain ATCC BAA-149 / DSM 14245 / SRS30216).